We begin with the raw amino-acid sequence, 68 residues long: Phage-like element PBSX protein XtrA (68 aa).

It to B.subtilis YqaO.

In Bacillus subtilis (strain 168), this protein is Phage-like element PBSX protein XtrA (xtrA).